We begin with the raw amino-acid sequence, 468 residues long: Serine--tRNA ligase (468 aa).

L-serine is bound at residue 272 to 274 (TAE). Residue 303–305 (RAE) participates in ATP binding. L-serine is bound at residue E326. Residue 390-393 (EISS) participates in ATP binding. Residue S426 coordinates L-serine.

This sequence belongs to the class-II aminoacyl-tRNA synthetase family. Type-1 seryl-tRNA synthetase subfamily. In terms of assembly, homodimer. The tRNA molecule binds across the dimer.

It localises to the cytoplasm. The enzyme catalyses tRNA(Ser) + L-serine + ATP = L-seryl-tRNA(Ser) + AMP + diphosphate + H(+). It carries out the reaction tRNA(Sec) + L-serine + ATP = L-seryl-tRNA(Sec) + AMP + diphosphate + H(+). Its pathway is aminoacyl-tRNA biosynthesis; selenocysteinyl-tRNA(Sec) biosynthesis; L-seryl-tRNA(Sec) from L-serine and tRNA(Sec): step 1/1. In terms of biological role, catalyzes the attachment of serine to tRNA(Ser). Is also able to aminoacylate tRNA(Sec) with serine, to form the misacylated tRNA L-seryl-tRNA(Sec), which will be further converted into selenocysteinyl-tRNA(Sec). The protein is Serine--tRNA ligase of Xanthobacter autotrophicus (strain ATCC BAA-1158 / Py2).